A 272-amino-acid polypeptide reads, in one-letter code: HMP-PP phosphatase (272 aa).

Asp8 (nucleophile) is an active-site residue. The Mg(2+) site is built by Asp8, Asp10, and Asp212.

The protein belongs to the HAD-like hydrolase superfamily. Cof family. The cofactor is Mg(2+).

The enzyme catalyses 4-amino-2-methyl-5-(diphosphooxymethyl)pyrimidine + H2O = 4-amino-2-methyl-5-(phosphooxymethyl)pyrimidine + phosphate + H(+). Functionally, catalyzes the hydrolysis of 4-amino-2-methyl-5-hydroxymethylpyrimidine pyrophosphate (HMP-PP) to 4-amino-2-methyl-5-hydroxymethylpyrimidine phosphate (HMP-P). This chain is HMP-PP phosphatase, found in Salmonella agona (strain SL483).